The chain runs to 234 residues: Large ribosomal subunit protein uL1 (234 aa).

Belongs to the universal ribosomal protein uL1 family. In terms of assembly, part of the 50S ribosomal subunit.

Binds directly to 23S rRNA. The L1 stalk is quite mobile in the ribosome, and is involved in E site tRNA release. In terms of biological role, protein L1 is also a translational repressor protein, it controls the translation of the L11 operon by binding to its mRNA. In Helicobacter pylori (strain Shi470), this protein is Large ribosomal subunit protein uL1.